The primary structure comprises 168 residues: Peptidoglycan-associated lipoprotein (168 aa).

A signal peptide spans 1-21 (MEMLKFGKFAALALAMAVAVG). Cys22 is lipidated: N-palmitoyl cysteine. A lipid anchor (S-diacylglycerol cysteine) is attached at Cys22. In terms of domain architecture, OmpA-like spans 56–168 (SDEAALRAIT…AQNRRVELKK (113 aa)). Residues 147 to 168 (RPVATGHDEQSWAQNRRVELKK) are disordered.

The protein belongs to the Pal lipoprotein family. In terms of assembly, the Tol-Pal system is composed of five core proteins: the inner membrane proteins TolA, TolQ and TolR, the periplasmic protein TolB and the outer membrane protein Pal. They form a network linking the inner and outer membranes and the peptidoglycan layer.

It is found in the cell outer membrane. Functionally, part of the Tol-Pal system, which plays a role in outer membrane invagination during cell division and is important for maintaining outer membrane integrity. This Pseudomonas aeruginosa (strain ATCC 15692 / DSM 22644 / CIP 104116 / JCM 14847 / LMG 12228 / 1C / PRS 101 / PAO1) protein is Peptidoglycan-associated lipoprotein.